The following is a 364-amino-acid chain: Chorismate synthase (364 aa).

NADP(+) is bound at residue R48. FMN-binding positions include 126–128 (RSS), G288, 303–307 (KPIAS), and R329.

This sequence belongs to the chorismate synthase family. Homotetramer. It depends on FMNH2 as a cofactor.

It catalyses the reaction 5-O-(1-carboxyvinyl)-3-phosphoshikimate = chorismate + phosphate. The protein operates within metabolic intermediate biosynthesis; chorismate biosynthesis; chorismate from D-erythrose 4-phosphate and phosphoenolpyruvate: step 7/7. Its function is as follows. Catalyzes the anti-1,4-elimination of the C-3 phosphate and the C-6 proR hydrogen from 5-enolpyruvylshikimate-3-phosphate (EPSP) to yield chorismate, which is the branch point compound that serves as the starting substrate for the three terminal pathways of aromatic amino acid biosynthesis. This reaction introduces a second double bond into the aromatic ring system. This chain is Chorismate synthase, found in Desulfovibrio desulfuricans (strain ATCC 27774 / DSM 6949 / MB).